Reading from the N-terminus, the 180-residue chain is Endoribonuclease YbeY (180 aa).

H149, H153, and H159 together coordinate Zn(2+).

This sequence belongs to the endoribonuclease YbeY family. Zn(2+) is required as a cofactor.

It localises to the cytoplasm. Its function is as follows. Single strand-specific metallo-endoribonuclease involved in late-stage 70S ribosome quality control and in maturation of the 3' terminus of the 16S rRNA. This chain is Endoribonuclease YbeY, found in Prochlorococcus marinus subsp. pastoris (strain CCMP1986 / NIES-2087 / MED4).